The sequence spans 369 residues: Ferredoxin--NADP reductase 2 (369 aa).

Positions 1–21 (MDLSIPNPVADATRQVEGGSP) are disordered. The FAD site is built by D58, Q66, Y71, V111, F146, D311, and T352.

This sequence belongs to the ferredoxin--NADP reductase type 2 family. In terms of assembly, homodimer. FAD serves as cofactor.

It catalyses the reaction 2 reduced [2Fe-2S]-[ferredoxin] + NADP(+) + H(+) = 2 oxidized [2Fe-2S]-[ferredoxin] + NADPH. The sequence is that of Ferredoxin--NADP reductase 2 from Cupriavidus taiwanensis (strain DSM 17343 / BCRC 17206 / CCUG 44338 / CIP 107171 / LMG 19424 / R1) (Ralstonia taiwanensis (strain LMG 19424)).